The following is a 636-amino-acid chain: DNA primase (636 aa).

The CHC2-type zinc-finger motif lies at 44–68 (CPFHDEKTPSFHVRPNHGHFHCFGC). Positions 266-352 (HQAVVVEGYT…SGQSFVAVAA (87 aa)) constitute a Toprim domain. Residues Glu272, Asp323, and Asp325 each coordinate Mg(2+). Basic and acidic residues predominate over residues 443–459 (REEAKGGGRKDNNRRGQ). Positions 443 to 481 (REEAKGGGRKDNNRRGQETAARPKPPPVQRPDPTDPTLW) are disordered.

This sequence belongs to the DnaG primase family. Monomer. Interacts with DnaB. Zn(2+) serves as cofactor. It depends on Mg(2+) as a cofactor.

The catalysed reaction is ssDNA + n NTP = ssDNA/pppN(pN)n-1 hybrid + (n-1) diphosphate.. RNA polymerase that catalyzes the synthesis of short RNA molecules used as primers for DNA polymerase during DNA replication. In Mycolicibacterium smegmatis (strain ATCC 700084 / mc(2)155) (Mycobacterium smegmatis), this protein is DNA primase.